Reading from the N-terminus, the 513-residue chain is Beta-glucosidase 5 (513 aa).

The first 26 residues, 1 to 26, serve as a signal peptide directing secretion; it reads MAAAIAVVYLSLLLLLLHGAAPAVLG. Glutamine 46 is a binding site for a beta-D-glucoside. The Proton donor role is filled by glutamate 192. A disulfide bond links cysteine 211 and cysteine 220. Residues asparagine 224 and asparagine 273 are each glycosylated (N-linked (GlcNAc...) asparagine). The a beta-D-glucoside site is built by tyrosine 336 and glutamate 405. Catalysis depends on glutamate 405, which acts as the Nucleophile. The N-linked (GlcNAc...) asparagine glycan is linked to asparagine 412. A beta-D-glucoside contacts are provided by residues tryptophan 447, 454–455, and tyrosine 463; that span reads EY.

Belongs to the glycosyl hydrolase 1 family.

The enzyme catalyses Hydrolysis of terminal, non-reducing beta-D-glucosyl residues with release of beta-D-glucose.. This is Beta-glucosidase 5 (BGLU5) from Oryza sativa subsp. japonica (Rice).